A 557-amino-acid chain; its full sequence is CCR4-NOT transcription complex subunit 6 (557 aa).

4 LRR repeats span residues 52–73, 75–96, 98–120, and 121–143; these read HLTA…IAKL, NLVY…LGNM, SLRE…GKLF, and QLQT…YQEP. A nuclease domain region spans residues 153–557; sequence LLDNLSGTAK…VNGIHLPGRR (405 aa). Position 240 (Glu240) interacts with Mg(2+). Substrate is bound by residues Glu240, Glu276, His361, and Pro366. Asp412 provides a ligand contact to Mg(2+). The Proton donor/acceptor role is filled by Asp412. 3 residues coordinate substrate: Asn414, Asn481, and Phe486.

The protein belongs to the CCR4/nocturin family. Component of the CCR4-NOT complex; distinct complexes seem to exist that differ in the participation of probably mutually exclusive catalytic subunits; the complex contains two deadenylase subunits, CNOT6 or CNOT6L, and CNOT7 or CNOT8. Interacts with CNOT7 and CNOT8. Interacts with UNR. Interacts with ZFP36L1 (via N-terminus). Interacts with ZNF335. Mg(2+) is required as a cofactor.

Its subcellular location is the cytoplasm. It localises to the nucleus. The enzyme catalyses Exonucleolytic cleavage of poly(A) to 5'-AMP.. In terms of biological role, poly(A) nuclease with 3'-5' RNase activity. Catalytic component of the CCR4-NOT complex which is one of the major cellular mRNA deadenylases and is linked to various cellular processes including bulk mRNA degradation, miRNA-mediated repression, translational repression during translational initiation and general transcription regulation. Additional complex functions may be a consequence of its influence on mRNA expression. Involved in mRNA decay mediated by the major-protein-coding determinant of instability (mCRD) of the FOS gene in the cytoplasm. In the presence of ZNF335, enhances ligand-dependent transcriptional activity of nuclear hormone receptors, including RARA. The increase of ligand-dependent ESR1-mediated transcription is much smaller, if any. Mediates cell proliferation and cell survival and prevents cellular senescence. The chain is CCR4-NOT transcription complex subunit 6 (CNOT6) from Homo sapiens (Human).